A 353-amino-acid polypeptide reads, in one-letter code: Phospho-N-acetylmuramoyl-pentapeptide-transferase (353 aa).

10 helical membrane-spanning segments follow: residues 22-42 (FAFF…ITWA), 65-85 (TPTM…LFCI), 88-108 (DNIF…IGLI), 129-149 (LLAQ…SSEL), 161-181 (PLFD…ISSS), 192-212 (GLAT…LYLS), 228-248 (GLGE…GFLW), 256-276 (VFMG…LAII), 281-301 (ILLL…ILQV), and 330-350 (KIIV…LASI).

Belongs to the glycosyltransferase 4 family. MraY subfamily. It depends on Mg(2+) as a cofactor.

The protein resides in the cell inner membrane. It catalyses the reaction UDP-N-acetyl-alpha-D-muramoyl-L-alanyl-gamma-D-glutamyl-meso-2,6-diaminopimeloyl-D-alanyl-D-alanine + di-trans,octa-cis-undecaprenyl phosphate = di-trans,octa-cis-undecaprenyl diphospho-N-acetyl-alpha-D-muramoyl-L-alanyl-D-glutamyl-meso-2,6-diaminopimeloyl-D-alanyl-D-alanine + UMP. The protein operates within cell wall biogenesis; peptidoglycan biosynthesis. Its function is as follows. Catalyzes the initial step of the lipid cycle reactions in the biosynthesis of the cell wall peptidoglycan: transfers peptidoglycan precursor phospho-MurNAc-pentapeptide from UDP-MurNAc-pentapeptide onto the lipid carrier undecaprenyl phosphate, yielding undecaprenyl-pyrophosphoryl-MurNAc-pentapeptide, known as lipid I. This Campylobacter jejuni subsp. jejuni serotype O:6 (strain 81116 / NCTC 11828) protein is Phospho-N-acetylmuramoyl-pentapeptide-transferase.